Consider the following 280-residue polypeptide: Fructose-1,6-bisphosphatase class 1 (280 aa).

Residues Glu-64, Asp-83, Leu-85, and Asp-86 each coordinate Mg(2+). Substrate is bound by residues 86–89 (DGSS), Tyr-190, and Lys-221. Residue Glu-227 coordinates Mg(2+).

This sequence belongs to the FBPase class 1 family. Homotetramer. Mg(2+) serves as cofactor.

Its subcellular location is the cytoplasm. The catalysed reaction is beta-D-fructose 1,6-bisphosphate + H2O = beta-D-fructose 6-phosphate + phosphate. It functions in the pathway carbohydrate biosynthesis; gluconeogenesis. The chain is Fructose-1,6-bisphosphatase class 1 from Campylobacter hominis (strain ATCC BAA-381 / DSM 21671 / CCUG 45161 / LMG 19568 / NCTC 13146 / CH001A).